The sequence spans 658 residues: Sodium/nucleoside cotransporter 1 (658 aa).

The Cytoplasmic portion of the chain corresponds to 1–75; that stretch reads MEKASGRKSL…ARTFCQRHAS (75 aa). Residues 76-99 form a helical membrane-spanning segment; it reads LFKKILLGLLCLAYAAYFLAACIL. Over 100–104 the chain is Extracellular; the sequence is DFQRA. A helical transmembrane segment spans residues 105-123; it reads LALFVITCLVILVLLLHFL. Residues 124–142 lie on the Cytoplasmic side of the membrane; that stretch reads KKFLGKKLTRCLKPFKNSQ. Residues 143–162 form a helical membrane-spanning segment; it reads LRLWIKRVFAGVSLVGLILW. Topologically, residues 163 to 173 are extracellular; the sequence is LALDTAQRPEQ. A helical transmembrane segment spans residues 174-190; that stretch reads LISFAGICMFVLILFAC. Residues 191 to 196 are Cytoplasmic-facing; sequence SKHHSA. A helical transmembrane segment spans residues 197–217; it reads VSWRTVFWGLGLQFVFGLLVI. The Extracellular segment spans residues 218 to 256; that stretch reads RTDPGFIAFQWLGDQVQIFLAYTVAGSSFVLGDTLVNDV. The chain crosses the membrane as a helical span at residues 257 to 278; it reads FAFQSLPIIIFFGCVMSILYYL. Over 279-289 the chain is Cytoplasmic; the sequence is GLVQWVVQKIA. A helical membrane pass occupies residues 290–313; the sequence is WFLQVTMRTTATETLAVAGNIFVG. Over 314 to 332 the chain is Extracellular; it reads MTEAPLLIRPYLADLTLSE. The helical transmembrane segment at 333-355 threads the bilayer; that stretch reads IHAVMTSGFATISGTVLGAFISF. Over 356–361 the chain is Cytoplasmic; sequence GIDASS. The helical transmembrane segment at 362 to 381 threads the bilayer; that stretch reads LISASVMGAPCALALSKLVY. The Extracellular portion of the chain corresponds to 382–418; sequence PEEEESKFKSKEGVKLPRGKESNVLEAASNGATDAIA. A helical transmembrane segment spans residues 419–441; the sequence is LVANVAANLVAFLAVLAFINAAL. The Cytoplasmic portion of the chain corresponds to 442–452; that stretch reads SWLGELVDIQG. Residues 453–474 traverse the membrane as a helical segment; sequence LTFQVICSYILRPMVYMMGVEW. The Extracellular segment spans residues 475-529; it reads TDCPMVAEMVGIKFFTNEFVAYQQLSQYKKKRLSGMEEWIDGQKQWISVRAEVIT. Residues 530-553 form a helical membrane-spanning segment; the sequence is TFSLCGFANLSSIGITLGGLTSMV. Topologically, residues 554-564 are cytoplasmic; it reads PHRKSDLSKVV. Residues 565–587 traverse the membrane as a helical segment; the sequence is IRALFTGSCVSFISACVAGILYV. Topologically, residues 588–658 are extracellular; that stretch reads PRGAETDCVS…CGFYNNTVCA (71 aa). Asparagine 653 is a glycosylation site (N-linked (GlcNAc...) asparagine).

This sequence belongs to the concentrative nucleoside transporter (CNT) (TC 2.A.41) family. Post-translationally, N-glycosylated. N-glycosylation is required for localization to the plasma membrane and the transporter activity.

It is found in the cell membrane. It localises to the apical cell membrane. The catalysed reaction is uridine(out) + Na(+)(out) = uridine(in) + Na(+)(in). It carries out the reaction thymidine(out) + Na(+)(out) = thymidine(in) + Na(+)(in). It catalyses the reaction cytidine(out) + Na(+)(out) = cytidine(in) + Na(+)(in). The enzyme catalyses adenosine(out) + Na(+)(out) = adenosine(in) + Na(+)(in). With respect to regulation, due to its high apparent affinity but slow transport, adenosine could act as a negative regulator of pyrimidine transport under some conditions. Sodium and pyrimidine nucleoside symporter of the plasma membrane that imports uridine, thymidine and cytidine into cells by coupling their transport to the transmembrane sodium electrochemical gradient. Also transports adenosine, an atypical substrate transported with high apparent affinity, but low maximum velocity. Therefore, exhibits the transport characteristics of the nucleoside transport system cit or N2 subtype (N2/cit). Involved in renal nucleoside (re)absorption. This chain is Sodium/nucleoside cotransporter 1 (SLC28A1), found in Oryctolagus cuniculus (Rabbit).